The sequence spans 358 residues: uncharacterized protein (358 aa).

Residues M1 to R47 form a disordered region. Positions N18–G29 are enriched in basic residues.

This sequence to M.leprae ML2427.

This is an uncharacterized protein from Mycobacterium tuberculosis (strain CDC 1551 / Oshkosh).